Here is a 65-residue protein sequence, read N- to C-terminus: Metallothionein-like protein 3B (65 aa).

The protein belongs to the metallothionein superfamily. Type 15 family.

In terms of biological role, metallothioneins have a high content of cysteine residues that bind various heavy metals. This is Metallothionein-like protein 3B (MT3B) from Oryza sativa subsp. indica (Rice).